Reading from the N-terminus, the 239-residue chain is EF-hand domain-containing protein D2 (239 aa).

Positions 1 to 51 (MATDELASKLSRRLQMEDEGGEATEQPGLNGAAAAAAEAPDETAQALGSAD) are disordered. Alanine 2 is modified (N-acetylalanine). At serine 11 the chain carries Phosphoserine. Low complexity predominate over residues 32–46 (AAAAAAEAPDETAQA). Serine 73 and serine 75 each carry phosphoserine. Tyrosine 82 carries the phosphotyrosine modification. EF-hand domains lie at 91-126 (KQIK…LGAP) and 127-162 (QTHL…AAAG). Ca(2+) contacts are provided by aspartate 104, aspartate 108, glutamate 115, aspartate 140, aspartate 142, aspartate 144, lysine 146, and glutamate 151. The residue at position 232 (lysine 232) is an N6-acetyllysine.

As to quaternary structure, interacts with CASP9; with inactive form.

It is found in the membrane raft. Its function is as follows. May regulate B-cell receptor (BCR)-induced immature and primary B-cell apoptosis. Plays a role as negative regulator of the canonical NF-kappa-B-activating branch. Controls spontaneous apoptosis through the regulation of BCL2L1 abundance. The polypeptide is EF-hand domain-containing protein D2 (Efhd2) (Rattus norvegicus (Rat)).